Reading from the N-terminus, the 347-residue chain is Methylthioribose-1-phosphate isomerase (347 aa).

Substrate contacts are provided by residues Arg-47–Ala-49, Arg-90, and Gln-199. Asp-240 serves as the catalytic Proton donor. Residue Asn-250–Lys-251 participates in substrate binding.

It belongs to the eIF-2B alpha/beta/delta subunits family. MtnA subfamily.

It catalyses the reaction 5-(methylsulfanyl)-alpha-D-ribose 1-phosphate = 5-(methylsulfanyl)-D-ribulose 1-phosphate. The protein operates within amino-acid biosynthesis; L-methionine biosynthesis via salvage pathway; L-methionine from S-methyl-5-thio-alpha-D-ribose 1-phosphate: step 1/6. In terms of biological role, catalyzes the interconversion of methylthioribose-1-phosphate (MTR-1-P) into methylthioribulose-1-phosphate (MTRu-1-P). The protein is Methylthioribose-1-phosphate isomerase of Natranaerobius thermophilus (strain ATCC BAA-1301 / DSM 18059 / JW/NM-WN-LF).